Consider the following 50-residue polypeptide: Insulin (50 aa).

3 cysteine pairs are disulfide-bonded: Cys-7–Cys-36, Cys-19–Cys-49, and Cys-35–Cys-40.

This sequence belongs to the insulin family. In terms of assembly, heterodimer of a B chain and an A chain linked by two disulfide bonds.

It localises to the secreted. Functionally, insulin decreases blood glucose concentration. It increases cell permeability to monosaccharides, amino acids and fatty acids. It accelerates glycolysis, the pentose phosphate cycle, and glycogen synthesis in liver. This Oncorhynchus gorbuscha (Pink salmon) protein is Insulin (ins).